The following is a 296-amino-acid chain: Nucleotide-binding protein M6_Spy0559 (296 aa).

13–20 is a binding site for ATP; that stretch reads GMSGAGKT. A GTP-binding site is contributed by 63 to 66; it reads DMRS.

This sequence belongs to the RapZ-like family.

In terms of biological role, displays ATPase and GTPase activities. The sequence is that of Nucleotide-binding protein M6_Spy0559 from Streptococcus pyogenes serotype M6 (strain ATCC BAA-946 / MGAS10394).